Consider the following 325-residue polypeptide: MRSTLRKDLIELFSQAGSEFISGQKISDALGCSRTAVWKHIEELRKEGYEVEAVRRKGYRLIKKPGKLSESEIRFGLKTEVMGQHLIYQDVISSTQKTAHELANNNAPEGTLVVADKQTAGRGRMSRVWHSQEGNGIWMSLILRPDIPLQKTPQLTLLAAVAVVQGIEAAAGIQTDIKWPNDILINGKKTVGILTEMQAEEDRVRSVIIGIGINVNQQSDDFPDELKDIATSLSQASGEKIDRAGVIQHILLCFEKRYRDYMTHGFTPIKLLWESYALGIGTNMRARTLNGTFYGKALGIDDEGVLLLETQEGIKKIYSADIELG.

The H-T-H motif DNA-binding region spans 23–42 (GQKISDALGCSRTAVWKHIE). The BPL/LPL catalytic domain occupies 74–262 (RFGLKTEVMG…CFEKRYRDYM (189 aa)). Biotin contacts are provided by residues Q118, 122-124 (RGR), and K189.

The protein belongs to the biotin--protein ligase family.

It carries out the reaction biotin + L-lysyl-[protein] + ATP = N(6)-biotinyl-L-lysyl-[protein] + AMP + diphosphate + H(+). Acts both as a biotin--[acetyl-CoA-carboxylase] ligase and a repressor. The sequence is that of Bifunctional ligase/repressor BirA from Bacillus spizizenii (strain ATCC 23059 / NRRL B-14472 / W23) (Bacillus subtilis subsp. spizizenii).